Here is a 457-residue protein sequence, read N- to C-terminus: tRNA modification GTPase MnmE (457 aa).

3 residues coordinate (6S)-5-formyl-5,6,7,8-tetrahydrofolate: Arg-25, Glu-87, and Arg-126. The 155-residue stretch at 223–377 (GISTAIIGRP…IEERINQLFF (155 aa)) folds into the TrmE-type G domain. Position 233 (Asn-233) interacts with K(+). GTP is bound by residues 233–238 (NVGKSS), 252–258 (TDIAGTT), and 277–280 (DTAG). Residue Ser-237 coordinates Mg(2+). K(+)-binding residues include Thr-252, Ile-254, and Thr-257. Residue Thr-258 coordinates Mg(2+). Lys-457 serves as a coordination point for (6S)-5-formyl-5,6,7,8-tetrahydrofolate.

Belongs to the TRAFAC class TrmE-Era-EngA-EngB-Septin-like GTPase superfamily. TrmE GTPase family. In terms of assembly, homodimer. Heterotetramer of two MnmE and two MnmG subunits. K(+) serves as cofactor.

It is found in the cytoplasm. Exhibits a very high intrinsic GTPase hydrolysis rate. Involved in the addition of a carboxymethylaminomethyl (cmnm) group at the wobble position (U34) of certain tRNAs, forming tRNA-cmnm(5)s(2)U34. The protein is tRNA modification GTPase MnmE of Streptococcus gordonii (strain Challis / ATCC 35105 / BCRC 15272 / CH1 / DL1 / V288).